Consider the following 340-residue polypeptide: Arginine N-succinyltransferase subunit beta (340 aa).

It belongs to the succinylarginine dihydrolase family. In terms of assembly, heterotetramer of two alpha and two beta subunits.

The catalysed reaction is succinyl-CoA + L-arginine = N(2)-succinyl-L-arginine + CoA + H(+). Its pathway is amino-acid degradation; L-arginine degradation via AST pathway; L-glutamate and succinate from L-arginine: step 1/5. This chain is Arginine N-succinyltransferase subunit beta (aruG), found in Pseudomonas aeruginosa (strain ATCC 15692 / DSM 22644 / CIP 104116 / JCM 14847 / LMG 12228 / 1C / PRS 101 / PAO1).